Here is a 280-residue protein sequence, read N- to C-terminus: Mevalonyl-coenzyme A hydratase SIDH (280 aa).

Positions 278-280 (SKL) match the PTS1-type peroxisomal targeting signal motif.

Belongs to the enoyl-CoA hydratase/isomerase family.

Its subcellular location is the peroxisome. Its pathway is siderophore biosynthesis. In terms of biological role, mevalonyl-coenzyme A hydratase; part of the gene cluster that mediates the biosynthesis of at least 11 siderophores, including beauverichelin A, dimerumic acid (DA), Na-dimethyl coprogen (NADC), eleutherazine B, ferricrocin (FC), fusarinine A, fusarinine C (FsC), metachelin A, mevalonolactone, rhodotorulic acid (RA) and tenellin. This cocktail of siderophores for iron metabolism is essential for virulence, and more specifically for the fungal virulence in penetrating through the host cuticle. Siderophore synthesis is also involved in conidial germination under iron-deficient conditions. For biosynthesis of fusarinine C, the transacylase SIDF transfers anhydromevalonyl to N(5)-hydroxyornithine. The required anhydromevalonyl-CoA moiety is derived from mevalonate by CoA ligation and dehydration catalyzed by SIDI and sidH respectively. SIDH is not essential for siderophore production, probably due to functional redundancy of this protein family, as there are 15 homologs of SIDH in B.bassiana. The protein is Mevalonyl-coenzyme A hydratase SIDH of Beauveria bassiana (strain ARSEF 2860) (White muscardine disease fungus).